We begin with the raw amino-acid sequence, 305 residues long: GMP synthase [glutamine-hydrolyzing] subunit B (305 aa).

Positions 2 to 185 (VETEEFIAEA…LGLEEVISER (184 aa)) constitute a GMPS ATP-PPase domain. ATP is bound at residue 29-35 (SGGVDSS).

As to quaternary structure, heterodimer composed of a glutamine amidotransferase subunit (A) and a GMP-binding subunit (B).

It carries out the reaction XMP + L-glutamine + ATP + H2O = GMP + L-glutamate + AMP + diphosphate + 2 H(+). The protein operates within purine metabolism; GMP biosynthesis; GMP from XMP (L-Gln route): step 1/1. Catalyzes the synthesis of GMP from XMP. The chain is GMP synthase [glutamine-hydrolyzing] subunit B from Halorubrum lacusprofundi (strain ATCC 49239 / DSM 5036 / JCM 8891 / ACAM 34).